A 234-amino-acid polypeptide reads, in one-letter code: 2,3-bisphosphoglycerate-dependent phosphoglycerate mutase (234 aa).

Residues 8-15 (RHGESVWN), 21-22 (TG), Arg-60, 87-90 (ERHY), Lys-98, 114-115 (RR), and 183-184 (GN) each bind substrate. His-9 (tele-phosphohistidine intermediate) is an active-site residue. The Proton donor/acceptor role is filled by Glu-87.

Belongs to the phosphoglycerate mutase family. BPG-dependent PGAM subfamily. Homodimer.

The enzyme catalyses (2R)-2-phosphoglycerate = (2R)-3-phosphoglycerate. It functions in the pathway carbohydrate degradation; glycolysis; pyruvate from D-glyceraldehyde 3-phosphate: step 3/5. Its function is as follows. Catalyzes the interconversion of 2-phosphoglycerate and 3-phosphoglycerate. This Citrifermentans bemidjiense (strain ATCC BAA-1014 / DSM 16622 / JCM 12645 / Bem) (Geobacter bemidjiensis) protein is 2,3-bisphosphoglycerate-dependent phosphoglycerate mutase.